A 354-amino-acid chain; its full sequence is UDP-3-O-acylglucosamine N-acyltransferase (354 aa).

Histidine 258 serves as the catalytic Proton acceptor.

The protein belongs to the transferase hexapeptide repeat family. LpxD subfamily. In terms of assembly, homotrimer.

It carries out the reaction a UDP-3-O-[(3R)-3-hydroxyacyl]-alpha-D-glucosamine + a (3R)-hydroxyacyl-[ACP] = a UDP-2-N,3-O-bis[(3R)-3-hydroxyacyl]-alpha-D-glucosamine + holo-[ACP] + H(+). The protein operates within bacterial outer membrane biogenesis; LPS lipid A biosynthesis. Its function is as follows. Catalyzes the N-acylation of UDP-3-O-acylglucosamine using 3-hydroxyacyl-ACP as the acyl donor. Is involved in the biosynthesis of lipid A, a phosphorylated glycolipid that anchors the lipopolysaccharide to the outer membrane of the cell. This is UDP-3-O-acylglucosamine N-acyltransferase from Sinorhizobium fredii (strain NBRC 101917 / NGR234).